A 188-amino-acid chain; its full sequence is Ribosome-recycling factor (188 aa).

The protein belongs to the RRF family.

It localises to the cytoplasm. Its function is as follows. Responsible for the release of ribosomes from messenger RNA at the termination of protein biosynthesis. May increase the efficiency of translation by recycling ribosomes from one round of translation to another. This chain is Ribosome-recycling factor, found in Cereibacter sphaeroides (strain ATCC 17025 / ATH 2.4.3) (Rhodobacter sphaeroides).